The following is a 272-amino-acid chain: Peptidoglycolipid exporter Gap (272 aa).

6 consecutive transmembrane segments (helical) span residues Ile-5 to Val-25, Val-36 to Val-56, Ile-79 to Leu-99, Leu-171 to Val-191, Ile-206 to Ser-226, and Ile-252 to Ile-272.

The protein belongs to the peptidoglycolipid addressing protein (GAP) (TC 2.A.116) family.

The protein resides in the cell inner membrane. Required for the transport of peptidoglycolipids (GPLs) to the cell surface. The sequence is that of Peptidoglycolipid exporter Gap from Mycolicibacterium smegmatis (strain ATCC 700084 / mc(2)155) (Mycobacterium smegmatis).